The sequence spans 109 residues: A-type ATP synthase subunit F (109 aa).

It belongs to the V-ATPase F subunit family. As to quaternary structure, has multiple subunits with at least A(3), B(3), C, D, E, F, H, I and proteolipid K(x).

It is found in the cell membrane. Component of the A-type ATP synthase that produces ATP from ADP in the presence of a proton gradient across the membrane. The sequence is that of A-type ATP synthase subunit F from Haloquadratum walsbyi (strain DSM 16790 / HBSQ001).